A 300-amino-acid polypeptide reads, in one-letter code: GTPase Era (300 aa).

Residues 8–176 (RCGYVAIVGR…EALIAKHLPE (169 aa)) form the Era-type G domain. Residues 16 to 23 (GRPNVGKS) are G1. 16 to 23 (GRPNVGKS) is a binding site for GTP. The tract at residues 42 to 46 (QTTRH) is G2. Residues 63 to 66 (DTPG) are G3. Residues 63 to 67 (DTPGM) and 125 to 128 (NKTD) contribute to the GTP site. The G4 stretch occupies residues 125–128 (NKTD). Residues 155 to 157 (ISA) form a G5 region. The region spanning 199–283 (VREKIMRQLG…MLNLWVKVKG (85 aa)) is the KH type-2 domain.

This sequence belongs to the TRAFAC class TrmE-Era-EngA-EngB-Septin-like GTPase superfamily. Era GTPase family. Monomer.

It is found in the cytoplasm. The protein resides in the cell inner membrane. In terms of biological role, an essential GTPase that binds both GDP and GTP, with rapid nucleotide exchange. Plays a role in 16S rRNA processing and 30S ribosomal subunit biogenesis and possibly also in cell cycle regulation and energy metabolism. This is GTPase Era from Pseudomonas putida (strain W619).